A 167-amino-acid polypeptide reads, in one-letter code: Ribosome maturation factor RimM (167 aa).

The PRC barrel domain maps to 94–165 (ENEYYYSDII…TIRITPMEGL (72 aa)).

This sequence belongs to the RimM family. As to quaternary structure, binds ribosomal protein uS19.

The protein resides in the cytoplasm. Its function is as follows. An accessory protein needed during the final step in the assembly of 30S ribosomal subunit, possibly for assembly of the head region. Essential for efficient processing of 16S rRNA. May be needed both before and after RbfA during the maturation of 16S rRNA. It has affinity for free ribosomal 30S subunits but not for 70S ribosomes. The sequence is that of Ribosome maturation factor RimM from Staphylococcus haemolyticus (strain JCSC1435).